Here is a 422-residue protein sequence, read N- to C-terminus: Chorismate synthase (422 aa).

NADP(+) contacts are provided by arginine 43 and arginine 49. FMN contacts are provided by residues 143–145, 264–265, glycine 309, 324–328, and arginine 350; these read RSS, QA, and KPIST.

This sequence belongs to the chorismate synthase family. Homotetramer. It depends on FMNH2 as a cofactor.

The enzyme catalyses 5-O-(1-carboxyvinyl)-3-phosphoshikimate = chorismate + phosphate. The protein operates within metabolic intermediate biosynthesis; chorismate biosynthesis; chorismate from D-erythrose 4-phosphate and phosphoenolpyruvate: step 7/7. Catalyzes the anti-1,4-elimination of the C-3 phosphate and the C-6 proR hydrogen from 5-enolpyruvylshikimate-3-phosphate (EPSP) to yield chorismate, which is the branch point compound that serves as the starting substrate for the three terminal pathways of aromatic amino acid biosynthesis. This reaction introduces a second double bond into the aromatic ring system. The chain is Chorismate synthase from Corynebacterium jeikeium (strain K411).